Consider the following 221-residue polypeptide: Small ribosomal subunit protein uS2 (221 aa).

The interval 202 to 221 (KVKMPQQNQRGRPQRRFQRR) is disordered.

It belongs to the universal ribosomal protein uS2 family.

The chain is Small ribosomal subunit protein uS2 from Methanococcus vannielii (strain ATCC 35089 / DSM 1224 / JCM 13029 / OCM 148 / SB).